A 112-amino-acid chain; its full sequence is Ig kappa chain V-II region MOPC 167 (112 aa).

The tract at residues 1 to 23 is framework-1; sequence DIVITQDELSNPVTSGESVSISC. C23 and C93 are joined by a disulfide. A complementarity-determining-1 region spans residues 24–39; sequence RSSKSLLYKDGKTYLN. Positions 40–54 are framework-2; the sequence is WFLQRPGQSPQLLIS. A complementarity-determining-2 region spans residues 55 to 61; it reads LMSTRAS. The interval 62–93 is framework-3; the sequence is GVSDRFSGSGSRTDFTLEISRVKAEDVGVYYC. Residues 94–102 are complementarity-determining-3; the sequence is QQLVEYPLT. The segment at 103–112 is framework-4; that stretch reads FGAGTKLELK.

The protein is Ig kappa chain V-II region MOPC 167 of Mus musculus (Mouse).